The following is a 342-amino-acid chain: Platelet-activating factor receptor (342 aa).

Residues 1-16 (MELNSSSRVDSEFRYT) lie on the Extracellular side of the membrane. The N-linked (GlcNAc...) asparagine glycan is linked to Asn4. A helical transmembrane segment spans residues 17-38 (LFPIVYSIIFVLGIIANGYVLW). At 39–54 (VFARLYPSKKLNEIKI) the chain is on the cytoplasmic side. The chain crosses the membrane as a helical span at residues 55-74 (FMVNLTVADLLFLITLPLWI). Over 75–91 (VYYSNQGNWFLPKFLCN) the chain is Extracellular. Cysteines 90 and 173 form a disulfide. Residues 92-113 (LAGCLFFINTYCSVAFLGVITY) form a helical membrane-spanning segment. The Cytoplasmic segment spans residues 114-133 (NRFQAVKYPIKTAQATTRKR). A helical transmembrane segment spans residues 134-155 (GIALSLVIWVAIVAAASYFLVM). The Extracellular segment spans residues 156 to 184 (DSTNVVSNKAGSGNITRCFEHYEKGSKPV). Asn169 is a glycosylation site (N-linked (GlcNAc...) asparagine). Residues 185-205 (LIIHICIVLGFFIVFLLILFC) traverse the membrane as a helical segment. Topologically, residues 206 to 233 (NLVIIHTLLRQPVKQQRNAEVRRRALWM) are cytoplasmic. A helical membrane pass occupies residues 234–254 (VCTVLAVFVICFVPHHMVQLP). At 255-276 (WTLAELGMWPSSNHQAINDAHQ) the chain is on the extracellular side. Residues 277–296 (VTLCLLSTNCVLDPVIYCFL) traverse the membrane as a helical segment. At 297–342 (TKKFRKHLSEKLNIMRSSQKCSRVTTDTGTEMAIPINHTPVNPIKN) the chain is on the cytoplasmic side.

Belongs to the G-protein coupled receptor 1 family. In terms of assembly, interacts with ARRB1.

It localises to the cell membrane. Functionally, receptor for platelet activating factor, a chemotactic phospholipid mediator that possesses potent inflammatory, smooth-muscle contractile and hypotensive activity. Seems to mediate its action via a G protein that activates a phosphatidylinositol-calcium second messenger system. The protein is Platelet-activating factor receptor (PTAFR) of Cavia porcellus (Guinea pig).